The primary structure comprises 156 residues: Ribosomal RNA large subunit methyltransferase H (156 aa).

S-adenosyl-L-methionine contacts are provided by residues Leu-73, Gly-104, and 123–128 (LSPLTL).

Belongs to the RNA methyltransferase RlmH family. In terms of assembly, homodimer.

The protein localises to the cytoplasm. The catalysed reaction is pseudouridine(1915) in 23S rRNA + S-adenosyl-L-methionine = N(3)-methylpseudouridine(1915) in 23S rRNA + S-adenosyl-L-homocysteine + H(+). Specifically methylates the pseudouridine at position 1915 (m3Psi1915) in 23S rRNA. The polypeptide is Ribosomal RNA large subunit methyltransferase H (Hahella chejuensis (strain KCTC 2396)).